The sequence spans 1124 residues: ATP-dependent DNA helicase mph1 (1124 aa).

Disordered stretches follow at residues 1 to 103 and 123 to 302; these read MFTL…EARS and QLTQ…PTQH. Composition is skewed to acidic residues over residues 7-17 and 169-178; these read DSSDYFDDDLG and RDDEYDDDEE. The span at 210-222 shows a compositional bias: polar residues; sequence TPIIGQQSTTIEA. A compositionally biased stretch (acidic residues) spans 226-236; it reads LLDDIPDDAFD. Polar residues predominate over residues 255 to 271; it reads SFTQSTNRPLGVRQTTL. The Helicase ATP-binding domain occupies 328-496; it reads IAQKGLFHNL…AVIDGLDISR (169 aa). 341 to 348 is an ATP binding site; sequence LPTGLGKT. Positions 444–447 match the DEAH box motif; it reads DEAH. Residues 666–840 form the Helicase C-terminal domain; it reads YLKQVVLNHF…GTRFTFHDDM (175 aa). A compositionally biased stretch (basic and acidic residues) spans 855-873; sequence KRAIDIPEENTVRDLPEPK. Disordered regions lie at residues 855 to 923 and 1016 to 1124; these read KRAI…TPEP and MPKA…DSDD. Basic residues-rich tracts occupy residues 874–886 and 906–916; these read RRGRAPKRPPKKF and SKRRVPNKSKA.

This sequence belongs to the DEAD box helicase family. DEAH subfamily. FANCM sub-subfamily. As to quaternary structure, interacts with the MHF histone-fold complex to form the FANCM-MHF complex.

Its subcellular location is the nucleus. The catalysed reaction is ATP + H2O = ADP + phosphate + H(+). Functionally, ATP-dependent DNA helicase involved in DNA damage repair by homologous recombination and in genome maintenance. Capable of unwinding D-loops. Plays a role in limiting crossover recombinants during mitotic DNA double-strand break (DSB) repair. Component of a FANCM-MHF complex which promotes gene conversion at blocked replication forks, probably by reversal of the stalled fork. The polypeptide is ATP-dependent DNA helicase mph1 (Aspergillus niger (strain ATCC MYA-4892 / CBS 513.88 / FGSC A1513)).